The primary structure comprises 146 residues: MISVIISGHGDFPIALKESSGMIFGEENNLIAVPFFKGEGIQTLQEKYHQALKDIPEEHEVLFLVDIFGGTPYNAAASFIAEDQRMDMAAGVNLPILLEVLSLREHLALKDLLNNLKAMSQQSFQVCSEHLEKVKTANQDTREDEL.

The PTS EIIA type-4 domain occupies 1-124 (MISVIISGHG…NLKAMSQQSF (124 aa)). His-9 serves as the catalytic Tele-phosphohistidine intermediate. His-9 is modified (phosphohistidine; by HPr).

The protein resides in the cytoplasm. Functionally, the phosphoenolpyruvate-dependent sugar phosphotransferase system (sugar PTS), a major carbohydrate active transport system, catalyzes the phosphorylation of incoming sugar substrates concomitantly with their translocation across the cell membrane. The enzyme II LevDE PTS system is involved in fructose transport. LevD and LevE act as negative regulators of the levanase operon. They may be involved in a PTS-mediated phosphorylation of a regulator. In Bacillus subtilis (strain 168), this protein is PTS system fructose-specific EIIA component.